A 406-amino-acid chain; its full sequence is Argininosuccinate synthase (406 aa).

Residue 9–17 coordinates ATP; sequence AYSGGLDTS. Tyr86 is an L-citrulline binding site. Gly116 is a binding site for ATP. Residues Thr118, Asn122, and Asp123 each contribute to the L-aspartate site. Asn122 lines the L-citrulline pocket. 5 residues coordinate L-citrulline: Arg126, Ser174, Ser183, Glu259, and Tyr271.

The protein belongs to the argininosuccinate synthase family. Type 1 subfamily. In terms of assembly, homotetramer.

It is found in the cytoplasm. It catalyses the reaction L-citrulline + L-aspartate + ATP = 2-(N(omega)-L-arginino)succinate + AMP + diphosphate + H(+). The protein operates within amino-acid biosynthesis; L-arginine biosynthesis; L-arginine from L-ornithine and carbamoyl phosphate: step 2/3. This chain is Argininosuccinate synthase, found in Geobacillus thermodenitrificans (strain NG80-2).